The primary structure comprises 492 residues: GTPase Der (492 aa).

EngA-type G domains lie at 3–166 (PVVA…VDEV) and 205–378 (IKLA…DSAT). GTP-binding positions include 9–16 (GRPNVGKS), 56–60 (DTGGI), 118–121 (NKTD), 211–218 (GRPNVGKS), 258–262 (DTAGV), and 323–326 (NKWD). The KH-like domain maps to 379–463 (RRVSTAMLTR…PIRIQFKEGE (85 aa)).

Belongs to the TRAFAC class TrmE-Era-EngA-EngB-Septin-like GTPase superfamily. EngA (Der) GTPase family. As to quaternary structure, associates with the 50S ribosomal subunit.

GTPase that plays an essential role in the late steps of ribosome biogenesis. In Klebsiella pneumoniae subsp. pneumoniae (strain ATCC 700721 / MGH 78578), this protein is GTPase Der.